A 404-amino-acid chain; its full sequence is Cysteine desulfurase IscS (404 aa).

Residues 75–76 (AT), N155, Q183, and 203–205 (SAH) each bind pyridoxal 5'-phosphate. The residue at position 206 (K206) is an N6-(pyridoxal phosphate)lysine. Pyridoxal 5'-phosphate is bound at residue T243. C328 serves as the catalytic Cysteine persulfide intermediate. Residue C328 coordinates [2Fe-2S] cluster.

Belongs to the class-V pyridoxal-phosphate-dependent aminotransferase family. NifS/IscS subfamily. Homodimer. Forms a heterotetramer with IscU, interacts with other sulfur acceptors. The cofactor is pyridoxal 5'-phosphate.

Its subcellular location is the cytoplasm. The catalysed reaction is (sulfur carrier)-H + L-cysteine = (sulfur carrier)-SH + L-alanine. Its pathway is cofactor biosynthesis; iron-sulfur cluster biosynthesis. In terms of biological role, master enzyme that delivers sulfur to a number of partners involved in Fe-S cluster assembly, tRNA modification or cofactor biosynthesis. Catalyzes the removal of elemental sulfur atoms from cysteine to produce alanine. Functions as a sulfur delivery protein for Fe-S cluster synthesis onto IscU, an Fe-S scaffold assembly protein, as well as other S acceptor proteins. The chain is Cysteine desulfurase IscS from Buchnera aphidicola subsp. Baizongia pistaciae (strain Bp).